The chain runs to 418 residues: Tryptophan synthase beta chain (418 aa).

At K109 the chain carries N6-(pyridoxal phosphate)lysine.

Belongs to the TrpB family. As to quaternary structure, tetramer of two alpha and two beta chains. Pyridoxal 5'-phosphate serves as cofactor.

The enzyme catalyses (1S,2R)-1-C-(indol-3-yl)glycerol 3-phosphate + L-serine = D-glyceraldehyde 3-phosphate + L-tryptophan + H2O. It participates in amino-acid biosynthesis; L-tryptophan biosynthesis; L-tryptophan from chorismate: step 5/5. The beta subunit is responsible for the synthesis of L-tryptophan from indole and L-serine. The sequence is that of Tryptophan synthase beta chain from Thermus thermophilus (strain ATCC 27634 / DSM 579 / HB8).